A 587-amino-acid chain; its full sequence is Urease subunit alpha (587 aa).

A Urease domain is found at 134-572 (GGIDTHVHFI…LPLAQRYLYT (439 aa)). Positions 139, 141, and 222 each coordinate Ni(2+). Lys-222 is subject to N6-carboxylysine. His-224 is a substrate binding site. Ni(2+) is bound by residues His-251 and His-277. Residue His-325 is the Proton donor of the active site. Asp-365 provides a ligand contact to Ni(2+).

The protein belongs to the metallo-dependent hydrolases superfamily. Urease alpha subunit family. Heterotrimer of UreA (gamma), UreB (beta) and UreC (alpha) subunits. Three heterotrimers associate to form the active enzyme. Ni cation serves as cofactor. Carboxylation allows a single lysine to coordinate two nickel ions.

It is found in the cytoplasm. The enzyme catalyses urea + 2 H2O + H(+) = hydrogencarbonate + 2 NH4(+). It participates in nitrogen metabolism; urea degradation; CO(2) and NH(3) from urea (urease route): step 1/1. The chain is Urease subunit alpha from Clostridium perfringens.